The sequence spans 270 residues: Beta carbonic anhydrase 1 (270 aa).

The Zn(2+) site is built by cysteine 39, aspartate 41, histidine 105, and cysteine 108.

The protein belongs to the beta-class carbonic anhydrase family. Zn(2+) serves as cofactor.

It catalyses the reaction hydrogencarbonate + H(+) = CO2 + H2O. Its function is as follows. Reversible hydration of carbon dioxide. The sequence is that of Beta carbonic anhydrase 1 from Caenorhabditis briggsae.